The chain runs to 135 residues: Transcription antitermination protein NusB (135 aa).

The protein belongs to the NusB family.

Its function is as follows. Involved in transcription antitermination. Required for transcription of ribosomal RNA (rRNA) genes. Binds specifically to the boxA antiterminator sequence of the ribosomal RNA (rrn) operons. The protein is Transcription antitermination protein NusB of Clostridium acetobutylicum (strain ATCC 824 / DSM 792 / JCM 1419 / IAM 19013 / LMG 5710 / NBRC 13948 / NRRL B-527 / VKM B-1787 / 2291 / W).